Here is a 351-residue protein sequence, read N- to C-terminus: UDP-N-acetylglucosamine--N-acetylmuramyl-(pentapeptide) pyrophosphoryl-undecaprenol N-acetylglucosamine transferase (351 aa).

UDP-N-acetyl-alpha-D-glucosamine-binding positions include 12–14, Asn124, Arg160, Ser188, Ile239, 258–263, and Gln283; these read TGG and ALTVCE.

It belongs to the glycosyltransferase 28 family. MurG subfamily.

The protein resides in the cell inner membrane. It carries out the reaction di-trans,octa-cis-undecaprenyl diphospho-N-acetyl-alpha-D-muramoyl-L-alanyl-D-glutamyl-meso-2,6-diaminopimeloyl-D-alanyl-D-alanine + UDP-N-acetyl-alpha-D-glucosamine = di-trans,octa-cis-undecaprenyl diphospho-[N-acetyl-alpha-D-glucosaminyl-(1-&gt;4)]-N-acetyl-alpha-D-muramoyl-L-alanyl-D-glutamyl-meso-2,6-diaminopimeloyl-D-alanyl-D-alanine + UDP + H(+). It participates in cell wall biogenesis; peptidoglycan biosynthesis. Functionally, cell wall formation. Catalyzes the transfer of a GlcNAc subunit on undecaprenyl-pyrophosphoryl-MurNAc-pentapeptide (lipid intermediate I) to form undecaprenyl-pyrophosphoryl-MurNAc-(pentapeptide)GlcNAc (lipid intermediate II). This chain is UDP-N-acetylglucosamine--N-acetylmuramyl-(pentapeptide) pyrophosphoryl-undecaprenol N-acetylglucosamine transferase, found in Actinobacillus pleuropneumoniae serotype 7 (strain AP76).